We begin with the raw amino-acid sequence, 510 residues long: Transcriptional regulatory protein GAT1 (510 aa).

At Ser-167 the chain carries Phosphoserine. Positions 220–256 (NHSHNSSHNNNSPSIANNTNANTNTNTSASTNTNSPL) are enriched in low complexity. 2 disordered regions span residues 220–311 (NHSH…IKCS) and 358–383 (QRSSTKINNNITPPPSSSLNPGAAGK). Phosphoserine occurs at positions 262 and 270. Over residues 274–287 (SSVRKKKPALKKIK) the composition is skewed to basic residues. The span at 294–306 (SSATPPSNTSSNP) shows a compositional bias: low complexity. The segment at 310 to 334 (CSNCTTSTTPLWRKDPKGLPLCNAC) adopts a GATA-type zinc-finger fold. Thr-369 bears the Phosphothreonine mark. Phosphoserine occurs at positions 399 and 418.

It localises to the nucleus. Its function is as follows. Positive regulator of multiple nitrogen catabolic genes. The sequence is that of Transcriptional regulatory protein GAT1 (GAT1) from Saccharomyces cerevisiae (strain ATCC 204508 / S288c) (Baker's yeast).